The primary structure comprises 436 residues: 3-ketoacyl-CoA thiolase (436 aa).

The Acyl-thioester intermediate role is filled by Cys99. Catalysis depends on proton acceptor residues His392 and Cys422.

It belongs to the thiolase-like superfamily. Thiolase family. In terms of assembly, heterotetramer of two alpha chains (FadJ) and two beta chains (FadI).

Its subcellular location is the cytoplasm. It carries out the reaction an acyl-CoA + acetyl-CoA = a 3-oxoacyl-CoA + CoA. It functions in the pathway lipid metabolism; fatty acid beta-oxidation. In terms of biological role, catalyzes the final step of fatty acid oxidation in which acetyl-CoA is released and the CoA ester of a fatty acid two carbons shorter is formed. The sequence is that of 3-ketoacyl-CoA thiolase from Shewanella sp. (strain ANA-3).